The sequence spans 67 residues: MQNDWIKLKEFFIYIFLFIDKTNVESITMWNLTQNEYLTLMVGVWIVILFLTWFLLWMVFKIVGYFK.

A run of 2 helical transmembrane segments spans residues 10–30 (EFFI…ITMW) and 40–60 (LMVG…WMVF).

This sequence belongs to the plectrovirus ORF10 family.

The protein localises to the host membrane. This is an uncharacterized protein from Spiroplasma citri (SpV1).